Reading from the N-terminus, the 379-residue chain is Homoserine O-succinyltransferase (379 aa).

One can recognise an AB hydrolase-1 domain in the interval 51 to 360 (NAVLICHALS…DAPQGHDAFL (310 aa)). The Nucleophile role is filled by S157. Residue R227 participates in substrate binding. Active-site residues include D323 and H356. D357 is a substrate binding site.

It belongs to the AB hydrolase superfamily. MetX family. As to quaternary structure, homodimer.

It localises to the cytoplasm. The catalysed reaction is L-homoserine + succinyl-CoA = O-succinyl-L-homoserine + CoA. Its pathway is amino-acid biosynthesis; L-methionine biosynthesis via de novo pathway; O-succinyl-L-homoserine from L-homoserine: step 1/1. In terms of biological role, transfers a succinyl group from succinyl-CoA to L-homoserine, forming succinyl-L-homoserine. The chain is Homoserine O-succinyltransferase from Pseudomonas aeruginosa (strain UCBPP-PA14).